We begin with the raw amino-acid sequence, 371 residues long: Pyruvate dehydrogenase E1 component subunit alpha (371 aa).

As to quaternary structure, heterodimer of an alpha and a beta chain. Thiamine diphosphate is required as a cofactor.

The enzyme catalyses N(6)-[(R)-lipoyl]-L-lysyl-[protein] + pyruvate + H(+) = N(6)-[(R)-S(8)-acetyldihydrolipoyl]-L-lysyl-[protein] + CO2. Activity of the E1 module is inhibited by the pyruvate dehydrogenase inhibitor PdhI. Its function is as follows. The pyruvate dehydrogenase complex catalyzes the overall conversion of pyruvate to acetyl-CoA and CO(2). It contains multiple copies of three enzymatic components: pyruvate dehydrogenase (E1), dihydrolipoamide acetyltransferase (E2) and lipoamide dehydrogenase (E3). Functionally, the B.subtilis PDH complex also possesses branched-chain 2-oxoacid dehydrogenase (BCDH) activity. The chain is Pyruvate dehydrogenase E1 component subunit alpha from Bacillus subtilis (strain 168).